We begin with the raw amino-acid sequence, 183 residues long: Phosphopantetheine adenylyltransferase (183 aa).

Residue serine 8 coordinates substrate. Residues 8 to 9 (SF) and histidine 16 each bind ATP. Residues lysine 40, threonine 72, and arginine 86 each contribute to the substrate site. ATP contacts are provided by residues 87–89 (GLR), glutamate 97, and 122–128 (YSFLSSS).

The protein belongs to the bacterial CoaD family. In terms of assembly, homohexamer. Mg(2+) is required as a cofactor.

The protein resides in the cytoplasm. The catalysed reaction is (R)-4'-phosphopantetheine + ATP + H(+) = 3'-dephospho-CoA + diphosphate. The protein operates within cofactor biosynthesis; coenzyme A biosynthesis; CoA from (R)-pantothenate: step 4/5. Reversibly transfers an adenylyl group from ATP to 4'-phosphopantetheine, yielding dephospho-CoA (dPCoA) and pyrophosphate. This Nostoc punctiforme (strain ATCC 29133 / PCC 73102) protein is Phosphopantetheine adenylyltransferase.